We begin with the raw amino-acid sequence, 878 residues long: Aminopeptidase M1-A (878 aa).

A required for membrane association region spans residues 105–212 (VGEGTLVIAF…MSTYLVAVIV (108 aa)). Residues Glu145 and 278-282 (GAMEN) each bind substrate. His314 contributes to the Zn(2+) binding site. The Proton acceptor role is filled by Glu315. Zn(2+) contacts are provided by His318 and Glu337. The short motif at 727–728 (LL) is the Dileucine internalization motif element.

This sequence belongs to the peptidase M1 family. In terms of assembly, homodimer. The cofactor is Zn(2+).

The protein localises to the membrane. Its subcellular location is the microsome membrane. The protein resides in the cytoplasm. It catalyses the reaction Release of an N-terminal amino acid, Xaa-|-Yaa- from a peptide, amide or arylamide. Xaa is preferably Ala, but may be most amino acids including Pro (slow action). When a terminal hydrophobic residue is followed by a prolyl residue, the two may be released as an intact Xaa-Pro dipeptide.. This is Aminopeptidase M1-A from Oryza sativa subsp. japonica (Rice).